The sequence spans 836 residues: Translation initiation factor IF-2 (836 aa).

The interval 1 to 234 (MSDTDGKKPL…SLAAMKRKQE (234 aa)) is disordered. Polar residues predominate over residues 18-27 (SGQVKQSFSH). Residues 50–60 (SGSSTTTSSPS) show a composition bias toward low complexity. The segment covering 88 to 156 (KLREVEDAKR…ATRRAEEAKR (69 aa)) has biased composition (basic and acidic residues). Residues 167–176 (PAESRASAPP) show a composition bias toward low complexity. Residues 185-206 (SRKEREREADRDRTTKKDDSRR) show a composition bias toward basic and acidic residues. The tr-type G domain occupies 333 to 501 (PRPPIITIMG…NIALQAEILD (169 aa)). Residues 342-349 (GHVDHGKT) form a G1 region. Position 342–349 (342–349 (GHVDHGKT)) interacts with GTP. A G2 region spans residues 367 to 371 (GITQH). Positions 389–392 (DTPG) are G3. Residues 389–393 (DTPGH) and 443–446 (NKID) contribute to the GTP site. Residues 443–446 (NKID) are G4. Residues 479–481 (SAK) are G5.

This sequence belongs to the TRAFAC class translation factor GTPase superfamily. Classic translation factor GTPase family. IF-2 subfamily.

The protein localises to the cytoplasm. In terms of biological role, one of the essential components for the initiation of protein synthesis. Protects formylmethionyl-tRNA from spontaneous hydrolysis and promotes its binding to the 30S ribosomal subunits. Also involved in the hydrolysis of GTP during the formation of the 70S ribosomal complex. The chain is Translation initiation factor IF-2 from Cereibacter sphaeroides (strain ATCC 17029 / ATH 2.4.9) (Rhodobacter sphaeroides).